The sequence spans 172 residues: Adenine phosphoribosyltransferase (172 aa).

This sequence belongs to the purine/pyrimidine phosphoribosyltransferase family. Homodimer.

It localises to the cytoplasm. It carries out the reaction AMP + diphosphate = 5-phospho-alpha-D-ribose 1-diphosphate + adenine. It participates in purine metabolism; AMP biosynthesis via salvage pathway; AMP from adenine: step 1/1. Catalyzes a salvage reaction resulting in the formation of AMP, that is energically less costly than de novo synthesis. The polypeptide is Adenine phosphoribosyltransferase (Latilactobacillus sakei subsp. sakei (strain 23K) (Lactobacillus sakei subsp. sakei)).